The sequence spans 124 residues: MALKIRLSRGGSKKRPYYHIVVADVRSPRDGRFLERVGAWDPMLPKDGPRVKLNEERIQYWLGQGAQPTDRVLRFLDAAGLKKRPARNNPHKGEPGKKAQERIAAAKQAAEDAAAAAEADSASE.

Positions 81-90 (LKKRPARNNP) are enriched in basic residues. The interval 81-124 (LKKRPARNNPHKGEPGKKAQERIAAAKQAAEDAAAAAEADSASE) is disordered. A compositionally biased stretch (basic and acidic residues) spans 91–101 (HKGEPGKKAQE). Residues 102 to 124 (RIAAAKQAAEDAAAAAEADSASE) are compositionally biased toward low complexity.

Belongs to the bacterial ribosomal protein bS16 family.

This is Small ribosomal subunit protein bS16 from Bartonella tribocorum (strain CIP 105476 / IBS 506).